The primary structure comprises 525 residues: GMP synthase [glutamine-hydrolyzing] (525 aa).

One can recognise a Glutamine amidotransferase type-1 domain in the interval 9 to 207 (RILILDFGSQ…VLDICRCTPL (199 aa)). Catalysis depends on Cys86, which acts as the Nucleophile. Residues His181 and Glu183 contribute to the active site. Positions 208 to 400 (WTPAKIIEDA…LGLPYDMLYR (193 aa)) constitute a GMPS ATP-PPase domain. 235-241 (SGGVDSS) contacts ATP.

In terms of assembly, homodimer.

The catalysed reaction is XMP + L-glutamine + ATP + H2O = GMP + L-glutamate + AMP + diphosphate + 2 H(+). It functions in the pathway purine metabolism; GMP biosynthesis; GMP from XMP (L-Gln route): step 1/1. Its function is as follows. Catalyzes the synthesis of GMP from XMP. The polypeptide is GMP synthase [glutamine-hydrolyzing] (Sodalis glossinidius (strain morsitans)).